Consider the following 174-residue polypeptide: Thiol-disulfide oxidoreductase ResA (174 aa).

Residues 11–30 (TAILLVLLAAIGYTIYTNFF) traverse the membrane as a helical; Signal-anchor for type II membrane protein segment. In terms of domain architecture, Thioredoxin spans 36–174 (VAVGSTAPDF…IERHLESIKP (139 aa)). Cys74 and Cys77 are disulfide-bonded.

Belongs to the thioredoxin family. ResA subfamily.

It localises to the cell membrane. It functions in the pathway protein modification; cytochrome c assembly. Thiol-disulfide oxidoreductase which is required in disulfide reduction during c-type cytochrome synthesis. May accept reducing equivalents from CcdA, leading to breakage of disulfide bonds in apocytochrome c; following this reduction heme can be covalently attached. In Geobacillus kaustophilus (strain HTA426), this protein is Thiol-disulfide oxidoreductase ResA.